The following is a 299-amino-acid chain: Formin-like protein 12 (299 aa).

The 295-residue stretch at 1-295 folds into the FH2 domain; sequence MASNCEKMLS…LEKRKMNIKQ (295 aa).

This sequence belongs to the formin-like family. Class-II subfamily.

The protein is Formin-like protein 12 (FH12) of Arabidopsis thaliana (Mouse-ear cress).